The chain runs to 334 residues: Cathepsin J (334 aa).

Positions 1–17 (MTPAVFLVILCFGVASG) are cleaved as a signal peptide. The propeptide at 18–113 (APARDPNLDA…PSAQKQVSIG (96 aa)) is activation peptide. The active site involves Cys138. Residues Asn217, Asn221, and Asn268 are each glycosylated (N-linked (GlcNAc...) asparagine). Cys269 and Cys322 are joined by a disulfide. The active site involves His276. The N-linked (GlcNAc...) asparagine glycan is linked to Asn288. Asn300 is a catalytic residue.

The protein belongs to the peptidase C1 family. In terms of tissue distribution, expressed specifically in placenta.

Its subcellular location is the lysosome. The polypeptide is Cathepsin J (Ctsj) (Rattus norvegicus (Rat)).